Reading from the N-terminus, the 292-residue chain is Ribosomal protein L11 methyltransferase (292 aa).

The S-adenosyl-L-methionine site is built by Thr-144, Gly-165, Asp-187, and Asn-229.

The protein belongs to the methyltransferase superfamily. PrmA family.

It localises to the cytoplasm. It carries out the reaction L-lysyl-[protein] + 3 S-adenosyl-L-methionine = N(6),N(6),N(6)-trimethyl-L-lysyl-[protein] + 3 S-adenosyl-L-homocysteine + 3 H(+). Methylates ribosomal protein L11. The sequence is that of Ribosomal protein L11 methyltransferase from Pseudomonas putida (strain W619).